The following is a 247-amino-acid chain: Membrane-embedded CAAX protease MroQ (247 aa).

The first 17 residues, M1–S17, serve as a signal peptide directing secretion. 3 helical membrane-spanning segments follow: residues V42–L62, I81–I101, and L119–L139. Residue E141 is part of the active site. The next 2 helical transmembrane spans lie at I162–D182 and F183–T203.

This sequence belongs to the peptidase U48 family.

The protein resides in the membrane. Functionally, participates in the regulation of the Agr quorum sensing activity and plays thereby an important role in virulence. Mechanistically, elicits a protease dependent control of Agr activity without playing a role in the processing of the pheromone-precursor AgrD. This chain is Membrane-embedded CAAX protease MroQ (mroQ), found in Staphylococcus aureus (strain USA300).